The following is a 477-amino-acid chain: Mitochondrial adenyl nucleotide antiporter SLC25A24 (477 aa).

Residues 1–173 (MLRWLRGFVL…RFWKHSTGID (173 aa)) are regulatory N-terminal domain. Residues 1–197 (MLRWLRGFVL…EKKSGQWWRQ (197 aa)) lie on the Mitochondrial intermembrane side of the membrane. EF-hand domains are found at residues 19–54 (EPPT…LGIP), 61–85 (EKIF…KYLK), 86–121 (DHEK…LGLT), and 122–157 (ISEQ…NPVT). 20 residues coordinate Ca(2+): aspartate 32, asparagine 34, aspartate 36, valine 38, glutamate 43, aspartate 68, asparagine 70, aspartate 72, lysine 74, glutamate 79, aspartate 99, asparagine 101, aspartate 103, lysine 105, glutamate 110, aspartate 135, aspartate 137, threonine 139, threonine 141, and glutamate 146. A linker region region spans residues 159–168 (IEEIIRFWKH). Residues 174–477 (IGDSLTIPDE…MKQTLGVTQK (304 aa)) form a C-terminal transmembrane transporter domain region. Solcar repeat units follow at residues 192 to 278 (GQWW…YKKL), 286 to 371 (IGTF…LKSH), and 383 to 471 (PGVM…MKQT). The chain crosses the membrane as a helical span at residues 198 to 215 (LLAGGVAGAVSRTSTAPL). Over 216-252 (DRLKVMMQVHGSKSAKMNIYGGFQQMVKEGGIRSLWR) the chain is Mitochondrial matrix. Residues 253–272 (GNGTNVIKIAPETAVKFWAY) form a helical membrane-spanning segment. Topologically, residues 273–295 (EQYKKLLTEEGQKIGTFERFVSG) are mitochondrial intermembrane. Residues 296-309 (SMAGATAQTFIYPM) form a helical membrane-spanning segment. At 310–345 (EVLKTRLAVGKTGQYSGMFDCAKKILKYEGMGAFYK) the chain is on the mitochondrial matrix side. At lysine 320 the chain carries N6-acetyllysine; alternate. At lysine 320 the chain carries N6-succinyllysine; alternate. Lysine 336 carries the N6-acetyllysine modification. A helical membrane pass occupies residues 346–365 (GYVPNLLGIIPYAGIDLAVY). Residues 366–388 (ELLKSHWLDNFAKDSVNPGVMVL) are Mitochondrial intermembrane-facing. The chain crosses the membrane as a helical span at residues 389–406 (LGCGALSSTCGQLASYPL). Residues 407-445 (ALVRTRMQAQAMIEKSPQLNMVGLFRRILSKEGLPGLYR) are Mitochondrial matrix-facing. Residue lysine 437 is modified to N6-acetyllysine; alternate. Lysine 437 bears the N6-succinyllysine; alternate mark. The chain crosses the membrane as a helical span at residues 446–465 (GITPNFMKVLPAVGISYVVY). The Mitochondrial intermembrane segment spans residues 466–477 (ENMKQTLGVTQK).

The protein belongs to the mitochondrial carrier (TC 2.A.29) family. In terms of assembly, monomer.

The protein resides in the mitochondrion inner membrane. The catalysed reaction is Mg(2+)(out) + phosphate(in) + ATP(out) = Mg(2+)(in) + phosphate(out) + ATP(in). It catalyses the reaction ADP(out) + phosphate(in) + H(+)(out) = ADP(in) + phosphate(out) + H(+)(in). The enzyme catalyses AMP(out) + phosphate(in) = AMP(in) + phosphate(out). It carries out the reaction phosphate(in) + ATP(out) + 2 H(+)(out) = phosphate(out) + ATP(in) + 2 H(+)(in). The catalysed reaction is dADP(in) + ADP(out) = dADP(out) + ADP(in). It catalyses the reaction Mg(2+)(in) + ADP(out) + ATP(in) + H(+)(out) = Mg(2+)(out) + ADP(in) + ATP(out) + H(+)(in). The enzyme catalyses ADP(out) + diphosphate(in) = ADP(in) + diphosphate(out). It carries out the reaction dAMP(in) + ADP(out) + H(+)(out) = dAMP(out) + ADP(in) + H(+)(in). The catalysed reaction is 3'-AMP(in) + ADP(out) + H(+)(out) = 3'-AMP(out) + ADP(in) + H(+)(in). It catalyses the reaction dAMP(out) + phosphate(in) = dAMP(in) + phosphate(out). The enzyme catalyses 3'-AMP(out) + phosphate(in) = 3'-AMP(in) + phosphate(out). It carries out the reaction dADP(out) + phosphate(in) + H(+)(out) = dADP(in) + phosphate(out) + H(+)(in). Its activity is regulated as follows. Activated by an increase in cytosolic calcium levels that induce a conformational change of the N-terminal regulatory domain, uncapping the channel and allowing transport. Inhibited by bathophenanthroline, mersalyl, p-hydroxymercuribenzoate, bromcresol purple and tannic acid. Its function is as follows. Electroneutral antiporter that mediates the transport of adenyl nucleotides through the inner mitochondrial membrane. Originally identified as an ATP-magnesium/inorganic phosphate antiporter, it also acts as a broad specificity adenyl nucleotide antiporter. By regulating the mitochondrial matrix adenyl nucleotide pool could adapt to changing cellular energetic demands and indirectly regulate adenyl nucleotide-dependent metabolic pathways. In vitro, a low activity is also observed with guanyl and pyrimidine nucleotides. May play a role in protecting cells against oxidative stress-induced cell death, by buffering calcium levels in the mitochondrial matrix through the formation of calcium-phosphate precipitates. This chain is Mitochondrial adenyl nucleotide antiporter SLC25A24 (SLC25A24), found in Bos taurus (Bovine).